Here is a 1436-residue protein sequence, read N- to C-terminus: Non-structural polyprotein 1AB (1436 aa).

The stretch at 104-142 (KLIHKANALQERLRLSQEEKATLALDVQFLQHENVRLKE) forms a coiled coil. 5 helical membrane passes run 156 to 176 (WIIM…YAHS), 239 to 259 (VFYY…LAIG), 286 to 306 (VLPT…TLMV), 313 to 333 (LLAI…LCFM), and 344 to 364 (GLIA…LTGT). Active-site charge relay system; for serine protease activity residues include His461, Asp489, and Ser551. Positions 587-620 (VKAPSQVELLKEEIERLKAQLNSATENATTVVTQ) form a coiled coil. O-(5'-phospho-RNA)-tyrosine is present on Tyr693. Disordered regions lie at residues 756–828 (AKPI…YSQT) and 913–934 (SKNK…EDQG). One can recognise a RdRp catalytic domain in the interval 1181 to 1307 (KHFIEFDWTR…TTPSVPDDYE (127 aa)).

It belongs to the astroviridae polyprotein 1AB family. Monomer. Cleaved by the viral and host proteases. The protease is probably autocatalytically cleaved.

Its subcellular location is the host membrane. The catalysed reaction is RNA(n) + a ribonucleoside 5'-triphosphate = RNA(n+1) + diphosphate. Responsible for the cleavage of the polyprotein into functional products. Its function is as follows. Protein covalently attached to the 5' extremity of the genomic and subgenomic RNAs. It may serve as a primer for the replicase. This chain is Non-structural polyprotein 1AB (ORF1), found in Homo sapiens (Human).